The sequence spans 605 residues: Cell wall integrity and stress response component 4 (605 aa).

Positions 1-26 (MQTSMVSAKVSIWLVCSVICSSLVRA) are cleaved as a signal peptide. Residues 27-110 (TQSVCSSQNT…DKDLFGYIYL (84 aa)) enclose the WSC domain. The disordered stretch occupies residues 151-305 (SPTLTSTSTT…PSSTTVTYTS (155 aa)). 4 N-linked (GlcNAc...) asparagine glycosylation sites follow: asparagine 340, asparagine 386, asparagine 389, and asparagine 398. Residues 381–399 (RITNNNNSNTTNSNTPTNK) are compositionally biased toward low complexity. The interval 381–404 (RITNNNNSNTTNSNTPTNKSTEKK) is disordered. A helical transmembrane segment spans residues 415–435 (ATFVVVGVVCLVIICILIYLI). Asparagine 479 carries an N-linked (GlcNAc...) asparagine glycan. Positions 494–521 (GQIMSESPSPRQSTYSLTAGSPPNDPST) are disordered. A compositionally biased stretch (polar residues) spans 497–521 (MSESPSPRQSTYSLTAGSPPNDPST). Asparagine 553 and asparagine 583 each carry an N-linked (GlcNAc...) asparagine glycan.

The protein localises to the membrane. In Saccharomyces cerevisiae (strain ATCC 204508 / S288c) (Baker's yeast), this protein is Cell wall integrity and stress response component 4 (WSC4).